The primary structure comprises 189 residues: Segregation and condensation protein B (189 aa).

The protein belongs to the ScpB family. Homodimer. Homodimerization may be required to stabilize the binding of ScpA to the Smc head domains. Component of a cohesin-like complex composed of ScpA, ScpB and the Smc homodimer, in which ScpA and ScpB bind to the head domain of Smc. The presence of the three proteins is required for the association of the complex with DNA.

The protein localises to the cytoplasm. Participates in chromosomal partition during cell division. May act via the formation of a condensin-like complex containing Smc and ScpA that pull DNA away from mid-cell into both cell halves. In Lachnoclostridium phytofermentans (strain ATCC 700394 / DSM 18823 / ISDg) (Clostridium phytofermentans), this protein is Segregation and condensation protein B.